The primary structure comprises 191 residues: Pyridoxal 5'-phosphate synthase subunit PdxT (191 aa).

An L-glutamine-binding site is contributed by 46-48 (GES). The active-site Nucleophile is C78. Residues R105 and 134-135 (IR) contribute to the L-glutamine site. Residues H170 and E172 each act as charge relay system in the active site.

This sequence belongs to the glutaminase PdxT/SNO family. In the presence of PdxS, forms a dodecamer of heterodimers. Only shows activity in the heterodimer.

The enzyme catalyses aldehydo-D-ribose 5-phosphate + D-glyceraldehyde 3-phosphate + L-glutamine = pyridoxal 5'-phosphate + L-glutamate + phosphate + 3 H2O + H(+). It catalyses the reaction L-glutamine + H2O = L-glutamate + NH4(+). It functions in the pathway cofactor biosynthesis; pyridoxal 5'-phosphate biosynthesis. Catalyzes the hydrolysis of glutamine to glutamate and ammonia as part of the biosynthesis of pyridoxal 5'-phosphate. The resulting ammonia molecule is channeled to the active site of PdxS. This chain is Pyridoxal 5'-phosphate synthase subunit PdxT, found in Carboxydothermus hydrogenoformans (strain ATCC BAA-161 / DSM 6008 / Z-2901).